Consider the following 1714-residue polypeptide: Bifunctional glutamate/proline--tRNA ligase (1714 aa).

The disordered stretch occupies residues 166-191 (DAKVKRSPQSSKEQTPAKTGERKQEG). The glutamate--tRNA ligase stretch occupies residues 170–754 (KRSPQSSKEQ…ASELDSQISQ (585 aa)). A compositionally biased stretch (polar residues) spans 172–182 (SPQSSKEQTPA). Residues 209–220 (PPEASGYLHIGH) carry the 'HIGH' region motif. The 'KMSKS' region motif lies at 438–442 (VLSKR). 3 disordered regions span residues 718 to 754 (PTSG…QISQ), 791 to 817 (GKDW…ANDA), and 943 to 962 (GTTA…EKNP). 2 stretches are compositionally biased toward low complexity: residues 734-746 (KASS…GQAS) and 800-817 (SASS…ANDA). WHEP-TRS domains lie at 744–800 (QASE…GQTS), 816–872 (DAVS…GTVP), 890–946 (SVAQ…GTTA), 969–1025 (TVNT…GTVA), and 1044–1100 (DVGS…DAKS). Positions 755-1201 (QGDLVRDLKS…KPAKPVKKEP (447 aa)) are 6 X 57 AA approximate repeats. 2 disordered regions span residues 1093–1119 (DWTP…SPAK) and 1168–1210 (FPVA…GAVK). Over residues 1094 to 1109 (WTPDAKSEPAVVKKEA) the composition is skewed to basic and acidic residues. A Phosphoserine modification is found at Ser-1110. The WHEP-TRS 6 domain maps to 1118 to 1174 (AKDELTQEINAQGEKVRAAKGNKAAKEVIDAEVAKLLALKAKYKEVTGTDFPVAGRG). The span at 1172-1181 (GRGGGGGGGS) shows a compositional bias: gly residues. Residues 1207 to 1714 (GAVKKQTRLG…KFYTLFGRSY (508 aa)) form a proline--tRNA ligase region. Residues 1322–1324 (TSE) and Arg-1353 each bind L-proline. Residues Arg-1353, Glu-1355, Arg-1364, Thr-1365, Gln-1438, and Thr-1441 each contribute to the ATP site. Gln-1438 provides a ligand contact to Mg(2+). His-1443 contacts L-proline. ATP contacts are provided by Thr-1476 and Arg-1478. 3 residues coordinate Zn(2+): Cys-1648, Cys-1653, and Cys-1695.

In the N-terminal section; belongs to the class-I aminoacyl-tRNA synthetase family. Glutamate--tRNA ligase type 2 subfamily. It in the C-terminal section; belongs to the class-II aminoacyl-tRNA synthetase family. As to quaternary structure, component of the multisynthetase complex which is comprised of a bifunctional glutamyl-prolyl-tRNA synthetase, the monospecific isoleucyl, leucyl, glutaminyl, methionyl, lysyl, arginyl, and aspartyl-tRNA synthetases as well as three auxiliary proteins, p18, p48 and p43.

It catalyses the reaction tRNA(Glu) + L-glutamate + ATP = L-glutamyl-tRNA(Glu) + AMP + diphosphate. The catalysed reaction is tRNA(Pro) + L-proline + ATP = L-prolyl-tRNA(Pro) + AMP + diphosphate. In terms of biological role, catalyzes the attachment of both L-glutamate and L-proline to their cognate tRNAs in a two-step reaction where the amino acid is first activated by ATP to form a covalent intermediate with AMP. Subsequently, the activated amino acid is transferred to the acceptor end of the cognate tRNA to form L-glutamyl-tRNA(Glu) and L-prolyl-tRNA(Pro). This is Bifunctional glutamate/proline--tRNA ligase from Drosophila melanogaster (Fruit fly).